Consider the following 146-residue polypeptide: MSFRGLSRPNAISGMGVADESKTTFLELQRKKTHRYVVFKIDESKKEVVVEKTGNPTESYDDFLASLPDNDCRYAVYDFDFVTSENCQKSKIFFFAWSPSTSGIRAKVLYSTSKDQLSRELQGIHYEIQATDPTEVDLEVLRERAN.

The residue at position 13 (Ser13) is a Phosphoserine. An ADF-H domain is found at 14–146 (GMGVADESKT…DLEVLRERAN (133 aa)).

Belongs to the actin-binding proteins ADF family. Phosphorylated. In terms of tissue distribution, expressed in vascular tissues of all organs.

It is found in the cytoplasm. Its subcellular location is the cytoskeleton. Actin-depolymerizing protein. Severs actin filaments (F-actin) and binds to actin monomers. The protein is Actin-depolymerizing factor 6 (ADF6) of Arabidopsis thaliana (Mouse-ear cress).